The primary structure comprises 376 residues: Putative cytosolic 5'-nucleotidase 3 (376 aa).

The active-site Nucleophile is Asp-119. Asp-119 and Asp-121 together coordinate Mg(2+). Catalysis depends on Asp-121, which acts as the Proton donor. Residues Glu-168, Ser-189, 236–237, and Lys-286 contribute to the substrate site; that span reads SA. Asp-312 is a Mg(2+) binding site.

Belongs to the pyrimidine 5'-nucleotidase family.

The protein localises to the cytoplasm. The catalysed reaction is a ribonucleoside 5'-phosphate + H2O = a ribonucleoside + phosphate. This chain is Putative cytosolic 5'-nucleotidase 3, found in Caenorhabditis elegans.